A 344-amino-acid chain; its full sequence is Envelope glycoprotein M (344 aa).

Residues 1–12 (MASSRVDTINLR) lie on the Intravirion side of the membrane. A helical transmembrane segment spans residues 13–33 (IWLVSIICAALSFINVTVYLI). At 34 to 76 (AINFPNLGFPCAYFEINDLKAVNLSANNQIYQMTHQLYINPVQ) the chain is on the virion surface side. A helical membrane pass occupies residues 77–97 (IICYVLIMAMLFLLIIIYYIV). Over 98 to 125 (CCAKVFSSNKTSNVNQTTRDITWMGDTS) the chain is Intravirion. A helical transmembrane segment spans residues 126-146 (SCFQFILIMDTFQLFVTALSF). Residue Arg147 is a topological domain, virion surface. Residues 148 to 168 (LVALGAFAYCIFFVCFTTFNV) traverse the membrane as a helical segment. Residues 169–203 (TLITQFQSADKSFFAFQKIHPNLKGTVQFKTVVIN) lie on the Intravirion side of the membrane. The helical transmembrane segment at 204-224 (LTELMLGYSTMFLGITTCLGV) threads the bilayer. Residues 225–238 (GNSIYIRSITVAYS) are Virion surface-facing. Residues 239–259 (SINTFLVMACIYSIVIEAVLV) form a helical membrane-spanning segment. The Intravirion portion of the chain corresponds to 260-263 (RYVK). The chain crosses the membrane as a helical span at residues 264–284 (PLFGYYVGMFCGAVGLSFPIL). Topologically, residues 285–293 (QYETFFESE) are virion surface. Residues 294–314 (WSTGLIINLAVIAIISIGFII) form a helical membrane-spanning segment. The Intravirion portion of the chain corresponds to 315–344 (CRLVRYLVKKKRRYKQLVNTESSSLMDENE).

It belongs to the herpesviridae glycoprotein M family. In terms of assembly, interacts (via N-terminus) with gN (via N-terminus). The gM-gN heterodimer forms the gCII complex.

The protein localises to the virion membrane. The protein resides in the host Golgi apparatus. It localises to the host trans-Golgi network. It is found in the host endosome membrane. Its subcellular location is the host nucleus inner membrane. Functionally, envelope glycoprotein important for virion assembly and egress. Plays a role in the correct incorporation of gH-gL into virion membrane. Directs the glycoprotein N (gN) to the host trans-Golgi network. The polypeptide is Envelope glycoprotein M (Homo sapiens (Human)).